A 382-amino-acid chain; its full sequence is Per os infectivity factor 2 (382 aa).

In terms of assembly, forms the PIF complex together with PIF1 and PIF3. The complex also interacts with per os infectivity factor PIF0.

Per os infectivity factor that mediates the specific binding of occluded virions (ODV) to the host midgut target cells. The polypeptide is Per os infectivity factor 2 (Autographa californica nuclear polyhedrosis virus (AcMNPV)).